The sequence spans 243 residues: Vesicle-associated membrane protein-associated protein B (243 aa).

Ala2 is modified (N-acetylalanine). Over 2-218 the chain is Cytoplasmic; that stretch reads AKVEQVLSLE…AALAASGKEE (217 aa). Residues 7 to 124 enclose the MSP domain; sequence VLSLEPQHEL…MDSKLRCVFE (118 aa). Phosphoserine is present on Ser146. Lys147 is covalently cross-linked (Glycyl lysine isopeptide (Lys-Gly) (interchain with G-Cter in SUMO1)). The residue at position 159 (Ser159) is a Phosphoserine. A coiled-coil region spans residues 161–196; it reads LDDAEVKKVMEECRRLQGEVQRLREESRQLKEEDGL. The residue at position 206 (Ser206) is a Phosphoserine. Residues 219-239 traverse the membrane as a helical; Anchor for type IV membrane protein segment; that stretch reads GLSARLLALVVLFFIVGVIIG.

This sequence belongs to the VAMP-associated protein (VAP) (TC 9.B.17) family. In terms of assembly, homodimer, and heterodimer with VAPA. Interacts with VAMP1 and VAMP2. Interacts (via MSP domain) with ZFYVE27. Interacts with RMDN3. Interacts with KIF5A in a ZFYVE27-dependent manner. Interacts (via MSP domain) with STARD3 (via phospho-FFAT motif). Interacts with STARD3NL (via FFAT motif). Interacts with CERT1. Interacts with PLEKHA3 and SACM1L to form a ternary complex. Interacts with VPS13A (via FFAT motif). Interacts with RB1CC1 (via phosphorylated FFAT motif), MIGA2 (via phosphorylated FFAT motif), RMDN3 (via phosphorylated FFAT motif), OSBPL1A (via FFAT motif), KCNB1 (via phosphorylated FFAT motif) and KCNB2 (via phosphorylated FFAT motif). Interacts (via MSP domain) with WDR44; the interactions connect the endoplasmic reticulum (ER) with the endosomal tubule. Ubiquitous.

The protein resides in the endoplasmic reticulum membrane. In terms of biological role, endoplasmic reticulum (ER)-anchored protein that mediates the formation of contact sites between the ER and endosomes via interaction with FFAT motif-containing proteins such as STARD3 or WDR44. Interacts with STARD3 in a FFAT motif phosphorylation dependent manner. Via interaction with WDR44 participates in neosynthesized protein export. Participates in the endoplasmic reticulum unfolded protein response (UPR) by inducing ERN1/IRE1 activity. Involved in cellular calcium homeostasis regulation. The sequence is that of Vesicle-associated membrane protein-associated protein B from Rattus norvegicus (Rat).